The sequence spans 240 residues: UDP-2,3-diacylglucosamine hydrolase (240 aa).

Mn(2+) contacts are provided by Asp8, His10, Asp41, Asn79, and His114. 79 to 80 is a substrate binding site; the sequence is NR. Substrate contacts are provided by Asp122, Ser160, Asn164, Lys167, and His195. Residues His195 and His197 each coordinate Mn(2+).

The protein belongs to the LpxH family. Requires Mn(2+) as cofactor.

It localises to the cell inner membrane. It carries out the reaction UDP-2-N,3-O-bis[(3R)-3-hydroxytetradecanoyl]-alpha-D-glucosamine + H2O = 2-N,3-O-bis[(3R)-3-hydroxytetradecanoyl]-alpha-D-glucosaminyl 1-phosphate + UMP + 2 H(+). It participates in glycolipid biosynthesis; lipid IV(A) biosynthesis; lipid IV(A) from (3R)-3-hydroxytetradecanoyl-[acyl-carrier-protein] and UDP-N-acetyl-alpha-D-glucosamine: step 4/6. In terms of biological role, hydrolyzes the pyrophosphate bond of UDP-2,3-diacylglucosamine to yield 2,3-diacylglucosamine 1-phosphate (lipid X) and UMP by catalyzing the attack of water at the alpha-P atom. Involved in the biosynthesis of lipid A, a phosphorylated glycolipid that anchors the lipopolysaccharide to the outer membrane of the cell. The chain is UDP-2,3-diacylglucosamine hydrolase from Shigella boydii serotype 18 (strain CDC 3083-94 / BS512).